The following is a 216-amino-acid chain: Ras-related protein Rab-11A (216 aa).

Residue G2 is modified to N-acetylglycine. GTP is bound by residues S20, G21, V22, G23, K24, S25, N26, N37, L38, S40, S42, and T43. S25 is a binding site for Mg(2+). Residues 36–47 (FNLESKSTIGVE) carry the Switch 1 motif. T43 and D66 together coordinate Mg(2+). The short motif at 67–86 (TAGQERYRAITSAYYRGAVG) is the Switch 2 element. G69, N124, K125, D127, A155, and L156 together coordinate GTP. The segment at 183-207 (DRRENDMSPSNNVVPIHVPPTTENK) is disordered. Residues C212 and C213 are each lipidated (S-geranylgeranyl cysteine). C213 is subject to Cysteine methyl ester. The propeptide at 214–216 (QNI) is removed in mature form.

This sequence belongs to the small GTPase superfamily. Rab family. In terms of assembly, interacts (GTP-bound form) with RAB11FIPs (via their C-termini) including RAB11FIP1, RAB11FIP2, RAB11FIP3, RAB11FIP4 and RAB11FIP5 effectors. Forms a complex with RAB11FIP3 and dynein intermediate chain DYNC1LI1; the interaction between RAB11A1 and RAB11FIP3 is direct; the complex regulates endocytic trafficking. Interacts with EVI5; EVI5 and RAB11FIP3 may be mutually exclusive and compete for binding RAB11A. Interacts with SGSM1, SGSM2, SGSM3 and VIPAS39. Interacts with EXOC6 in a GTP-dependent manner. Interacts with RAB11FIP5. Interacts with STXBP6. Interacts (GDP-bound form) with ZFYVE27. Interacts with BIRC6/bruce. May interact with TBC1D14. Interacts with UNC119; in a cell cycle-dependent manner. GDP-bound and nucleotide-free forms interact with SH3BP5. Interacts (GDP-bound form) with KIF5A in a ZFYVE27-dependent manner. Interacts (GDP-bound form) with RELCH. Found in a complex composed of RELCH, OSBP1 and RAB11A. Interacts with TBC1D12. Interacts with DEF6. Interacts with ATP9A. Forms a heterotetramer with RAB11FIP3; the GTP-bound form is preferred for binding. Forms a complex with Rabin8/RAB3IP and RAB11FIP3, probably a heterohexamer with two of each protein subunit, where Rabin8/RAB3IP and RAB11FIP3 simultaneously bind to RAB11A; the complex promotes preciliary trafficking and cilia growth. Forms a complex containing RAB11A, ASAP1, Rabin8/RAB3IP, RAP11FIP3 and ARF4; the complex promotes preciliary trafficking; the complex binds to RHO in photoreceptor cells and promotes RHO ciliary transport. Interacts (GTP-bound form) with WDR44; the interaction prevents RAB11A-RAB3IP-RAB11FIP3 complex formation. Mg(2+) is required as a cofactor.

It localises to the cell membrane. The protein resides in the endosome membrane. It is found in the recycling endosome membrane. Its subcellular location is the cleavage furrow. The protein localises to the cytoplasmic vesicle. It localises to the phagosome. The protein resides in the cytoplasmic vesicle membrane. It is found in the golgi apparatus. Its subcellular location is the trans-Golgi network. The catalysed reaction is GTP + H2O = GDP + phosphate + H(+). Its activity is regulated as follows. Regulated by guanine nucleotide exchange factors (GEFs) which promote the exchange of bound GDP for free GTP. Regulated by GTPase activating proteins (GAPs) which increase the GTP hydrolysis activity. Inhibited by GDP dissociation inhibitors (GDIs) which prevent Rab-GDP dissociation. Its function is as follows. The small GTPases Rab are key regulators of intracellular membrane trafficking, from the formation of transport vesicles to their fusion with membranes. Rabs cycle between an inactive GDP-bound form and an active GTP-bound form that is able to recruit to membranes different set of downstream effectors directly responsible for vesicle formation, movement, tethering and fusion. The small Rab GTPase RAB11A regulates endocytic recycling. Forms a functional Rab11/RAB11FIP3/dynein complex that regulates the movement of peripheral sorting endosomes (SE) along microtubule tracks toward the microtubule organizing center/centrosome, generating the endosomal recycling compartment (ERC). Acts as a major regulator of membrane delivery during cytokinesis. Together with MYO5B and RAB8A participates in epithelial cell polarization. Together with Rabin8/RAB3IP, RAB8A, the exocyst complex, PARD3, PRKCI, ANXA2, CDC42 and DNMBP promotes transcytosis of PODXL to the apical membrane initiation sites (AMIS), apical surface formation and lumenogenesis. Together with MYO5B participates in CFTR trafficking to the plasma membrane and TF (Transferrin) recycling in nonpolarized cells. Required in a complex with MYO5B and RAB11FIP2 for the transport of NPC1L1 to the plasma membrane. Participates in the sorting and basolateral transport of CDH1 from the Golgi apparatus to the plasma membrane. Regulates the recycling of FCGRT (receptor of Fc region of monomeric IgG) to basolateral membranes. May also play a role in melanosome transport and release from melanocytes. Promotes Rabin8/RAB3IP preciliary vesicular trafficking to mother centriole by forming a ciliary targeting complex containing Rab11, ASAP1, Rabin8/RAB3IP, RAB11FIP3 and ARF4, thereby regulating ciliogenesis initiation. On the contrary, upon LPAR1 receptor signaling pathway activation, interaction with phosphorylated WDR44 prevents Rab11-RAB3IP-RAB11FIP3 complex formation and cilia growth. Participates in the export of a subset of neosynthesized proteins through a Rab8-Rab10-Rab11-endososomal dependent export route via interaction with WDR44. The chain is Ras-related protein Rab-11A from Bos taurus (Bovine).